The chain runs to 212 residues: Inactive ribonuclease-like protein 10 (212 aa).

A signal peptide spans Met1–Gly24. N-linked (GlcNAc...) asparagine glycans are attached at residues Asn129 and Asn204.

Belongs to the pancreatic ribonuclease family. In terms of processing, the N-terminus is blocked. Glycosylated. Male-specific expression in proximal caput of the epididymis.

It localises to the secreted. Its function is as follows. Secreted proximal epididymal protein required for post-testicular sperm maturation and male fertility. May be involved in sperm adhesion to the egg zona pellucida. Does not have ribonuclease activity. The chain is Inactive ribonuclease-like protein 10 (Rnase10) from Rattus norvegicus (Rat).